The chain runs to 347 residues: Core-capsid bridging protein (347 aa).

The tract at residues 290-320 is disordered; the sequence is GYRGTTFQRRATAPSRRRGPSRRRRRRKATL. Positions 304–318 are enriched in basic residues; that stretch reads SRRRGPSRRRRRRKA.

This sequence belongs to the adenoviridae core-capsid bridging protein family. Monomer. Homodimer. Exists in equilibrium between monomers and dimers in solution. Interacts with the histone-like nucleoprotein; this interactions bridge the virus core to the capsid. Interacts with core protein X; this interactions bridge the virus core to the capsid. Interacts with the endosome lysis protein VI; this interactions bridge the virus core to the capsid. Interacts with the peripentonal hexons. Interacts with host NPM1; this interaction might play a role in virus assembly.

The protein localises to the virion. It is found in the host nucleus. The protein resides in the host nucleolus. In terms of biological role, associates loosely with the viral DNA to form an outer shell around the nucleoprotein-DNA complex and links it with the capsid by binding the endosome lysis protein. Dissociates from the viral genome during entry. Might be involved in nuclear capsid assembly of the viral particles through its association with NPM1/nucleophosmin. The protein is Core-capsid bridging protein of Homo sapiens (Human).